The following is a 660-amino-acid chain: Histone deacetylase 5 (660 aa).

The residue at position 2 (Ala-2) is an N-acetylalanine. The interval Lys-26–Glu-349 is histone deacetylase. His-158 (proton donor/acceptor) is an active-site residue. The Zn(2+) site is built by Asp-198, His-200, and Asp-291.

Belongs to the histone deacetylase family. HD type 2 subfamily. As to quaternary structure, interacts with HDA6. It depends on Zn(2+) as a cofactor. Expressed in stems, leaves, flowers, siliques and mature seeds.

The protein localises to the nucleus. It is found in the cytoplasm. The enzyme catalyses N(6)-acetyl-L-lysyl-[histone] + H2O = L-lysyl-[histone] + acetate. With respect to regulation, inhibited by trichostatin A (TSA), a well-known histone deacetylase inhibitor. Its function is as follows. Responsible for the deacetylation of lysine residues on the N-terminal part of the core histones (H2A, H2B, H3 and H4). Histone deacetylation gives a tag for epigenetic repression and plays an important role in transcriptional regulation, cell cycle progression and developmental events. Histone deacetylases act via the formation of large multiprotein complexes. Involved in the regulation of flowering time by repressing FLC and AGL27/MAF1 expression. Forms a histone deacetylase complex with HDA6, FLD and MSI4/FVE that represses FLC gene expression to control flowering time. Unlike its tandem duplication HDA18, HDA5 does not seem to be required for the cellular patterning in the root epidermis. The sequence is that of Histone deacetylase 5 from Arabidopsis thaliana (Mouse-ear cress).